Here is a 453-residue protein sequence, read N- to C-terminus: Probable glycine dehydrogenase (decarboxylating) subunit 1 (453 aa).

This sequence belongs to the GcvP family. N-terminal subunit subfamily. As to quaternary structure, the glycine cleavage system is composed of four proteins: P, T, L and H. In this organism, the P 'protein' is a heterodimer of two subunits.

It carries out the reaction N(6)-[(R)-lipoyl]-L-lysyl-[glycine-cleavage complex H protein] + glycine + H(+) = N(6)-[(R)-S(8)-aminomethyldihydrolipoyl]-L-lysyl-[glycine-cleavage complex H protein] + CO2. The glycine cleavage system catalyzes the degradation of glycine. The P protein binds the alpha-amino group of glycine through its pyridoxal phosphate cofactor; CO(2) is released and the remaining methylamine moiety is then transferred to the lipoamide cofactor of the H protein. The protein is Probable glycine dehydrogenase (decarboxylating) subunit 1 of Dictyoglomus turgidum (strain DSM 6724 / Z-1310).